We begin with the raw amino-acid sequence, 159 residues long: ATP synthase subunit b 1 (159 aa).

Residues 5 to 25 traverse the membrane as a helical segment; that stretch reads FWAFIGLILFLALLFYFKVPA.

It belongs to the ATPase B chain family. F-type ATPases have 2 components, F(1) - the catalytic core - and F(0) - the membrane proton channel. F(1) has five subunits: alpha(3), beta(3), gamma(1), delta(1), epsilon(1). F(0) has three main subunits: a(1), b(2) and c(10-14). The alpha and beta chains form an alternating ring which encloses part of the gamma chain. F(1) is attached to F(0) by a central stalk formed by the gamma and epsilon chains, while a peripheral stalk is formed by the delta and b chains.

The protein resides in the cell inner membrane. Functionally, f(1)F(0) ATP synthase produces ATP from ADP in the presence of a proton or sodium gradient. F-type ATPases consist of two structural domains, F(1) containing the extramembraneous catalytic core and F(0) containing the membrane proton channel, linked together by a central stalk and a peripheral stalk. During catalysis, ATP synthesis in the catalytic domain of F(1) is coupled via a rotary mechanism of the central stalk subunits to proton translocation. In terms of biological role, component of the F(0) channel, it forms part of the peripheral stalk, linking F(1) to F(0). The polypeptide is ATP synthase subunit b 1 (Bartonella bacilliformis (strain ATCC 35685 / KC583 / Herrer 020/F12,63)).